The primary structure comprises 736 residues: Catalase-peroxidase (736 aa).

A cross-link (tryptophyl-tyrosyl-methioninium (Trp-Tyr) (with M-250)) is located at residues 96–224 (WHSAGTYRTG…LAAVQMGLIY (129 aa)). Catalysis depends on histidine 97, which acts as the Proton acceptor. The segment at residues 224–250 (YVNPEGPDGNPDPVASGRDVRETFGRM) is a cross-link (tryptophyl-tyrosyl-methioninium (Tyr-Met) (with W-96)). Histidine 265 contributes to the heme b binding site.

This sequence belongs to the peroxidase family. Peroxidase/catalase subfamily. In terms of assembly, homodimer or homotetramer. Heme b serves as cofactor. In terms of processing, formation of the three residue Trp-Tyr-Met cross-link is important for the catalase, but not the peroxidase activity of the enzyme.

It catalyses the reaction H2O2 + AH2 = A + 2 H2O. The catalysed reaction is 2 H2O2 = O2 + 2 H2O. Functionally, bifunctional enzyme with both catalase and broad-spectrum peroxidase activity. This chain is Catalase-peroxidase, found in Pelobacter propionicus (strain DSM 2379 / NBRC 103807 / OttBd1).